Reading from the N-terminus, the 251-residue chain is Triosephosphate isomerase (251 aa).

Residue asparagine 9 to lysine 11 coordinates substrate. Residue histidine 95 is the Electrophile of the active site. The active-site Proton acceptor is glutamate 167. Residues glycine 173, serine 213, and glycine 234 to glycine 235 each bind substrate. Residue serine 213 is modified to Phosphoserine.

Belongs to the triosephosphate isomerase family. Homodimer.

The protein localises to the cytoplasm. It catalyses the reaction D-glyceraldehyde 3-phosphate = dihydroxyacetone phosphate. The protein operates within carbohydrate biosynthesis; gluconeogenesis. Its pathway is carbohydrate degradation; glycolysis; D-glyceraldehyde 3-phosphate from glycerone phosphate: step 1/1. In terms of biological role, involved in the gluconeogenesis. Catalyzes stereospecifically the conversion of dihydroxyacetone phosphate (DHAP) to D-glyceraldehyde-3-phosphate (G3P). This Bacillus cereus (strain G9842) protein is Triosephosphate isomerase.